The sequence spans 476 residues: MPIFVNTVYCKNILALSMTKKFKTIIDAIGGNIIVNSTILKKLSPYFRTHLRQKYTKNKDPVTRVCLDLDIHSLTSIVIYSYTGKVYIDSHNVVNLLRASILTSVEFIIYTCINFILRDFRKEYCVECYMMGIEYGLSNLLCHTKNFIAKHFLELEDDIIDNFDYLSMKLILESDELNVPDEDFVIKWYIKRRNKLGNLLLLIKNVIRSNYLSPRGINNVKWILDCTKIFHCDKQPRKSYKYPFIEYPMNMDQIIDIFHMCTSTHVGEVVYLIGGWMNNEIHNNAIAVNYISNNWIPIPPMNSPRLYASGIPANNKLYVVGGLPNPTSVERWFHGDAAWVNMPSLLKPRCNPAVASINNVIYVMGGHSETDTTTEYLLPNHDQWQFGPSTYYPHYKSCALVFGRRLFLVGRNAEFYCESSNTWTLIDDPIYPRDNPELIIVDNKLLLIGGFYRESYIDTIEVYNHHTYSWNIWDGK.

Positions 10 to 90 (CKNILALSMT…SYTGKVYIDS (81 aa)) constitute a BTB domain. The 94-residue stretch at 125-218 (CVECYMMGIE…SNYLSPRGIN (94 aa)) folds into the BACK domain. Kelch repeat units lie at residues 269 to 315 (VVYL…PANN), 316 to 359 (KLYV…SINN), 361 to 404 (IYVM…VFGR), 406 to 443 (LFLV…IVDN), and 444 to 476 (KLLL…WDGK).

The protein belongs to the orthopoxvirus OPG047 family.

Functionally, might have a role in the suppression of host immune response. In Vaccinia virus (strain Ankara) (VACV), this protein is Immune evasion protein OPG047 (OPG047).